A 348-amino-acid chain; its full sequence is Centromere protein L (348 aa).

The protein belongs to the CENP-L/IML3 family.

The protein resides in the nucleus. It is found in the chromosome. The protein localises to the centromere. In terms of biological role, probable component of a centromeric complex involved in assembly of kinetochore proteins, mitotic progression and chromosome segregation. The protein is Centromere protein L (cenpl) of Xenopus tropicalis (Western clawed frog).